A 288-amino-acid polypeptide reads, in one-letter code: ATP synthase gamma chain (288 aa).

This sequence belongs to the ATPase gamma chain family. F-type ATPases have 2 components, CF(1) - the catalytic core - and CF(0) - the membrane proton channel. CF(1) has five subunits: alpha(3), beta(3), gamma(1), delta(1), epsilon(1). CF(0) has three main subunits: a, b and c.

It is found in the cell membrane. In terms of biological role, produces ATP from ADP in the presence of a proton gradient across the membrane. The gamma chain is believed to be important in regulating ATPase activity and the flow of protons through the CF(0) complex. The polypeptide is ATP synthase gamma chain (Symbiobacterium thermophilum (strain DSM 24528 / JCM 14929 / IAM 14863 / T)).